The sequence spans 280 residues: NLP effector protein Pc553546 (280 aa).

Residues 1 to 19 (MNLVAALVLCFALLSSVRG) form the signal peptide. The Hepta-peptide GHRHDWE motif signature appears at 123 to 129 (AGRHDWA). Residues Asn-142 and Asn-209 are each glycosylated (N-linked (GlcNAc...) asparagine).

Belongs to the Necrosis inducing protein (NPP1) family.

The protein localises to the secreted. Its function is as follows. Secreted effector that contributes strongly to virulence during infection by P.capsici. The polypeptide is NLP effector protein Pc553546 (Phytophthora capsici).